We begin with the raw amino-acid sequence, 217 residues long: Homologous-pairing protein 2 homolog (217 aa).

Positions 93-153 (IVALTAKVQS…LKNIKAATNH (61 aa)) form a coiled coil. Positions 118-182 (SSALTTPEMQ…WRKRKRMATE (65 aa)) are DNA-binding.

It belongs to the HOP2 family. As to quaternary structure, interacts with the DNA-binding domain of the nuclear receptors NR3C1/GR, ESR2/ER-beta, THRB and RXRA. Forms a stable heterodimer with MND1. Interacts with PSMC3/TBP1. In terms of processing, PTM: Phosphorylated by PKA, PKC and MAPK. Highly expressed in testis and colon.

The protein localises to the nucleus. Functionally, plays an important role in meiotic recombination. Stimulates DMC1-mediated strand exchange required for pairing homologous chromosomes during meiosis. The complex PSMC3IP/MND1 binds DNA, stimulates the recombinase activity of DMC1 as well as DMC1 D-loop formation from double-strand DNA. This complex stabilizes presynaptic RAD51 and DMC1 filaments formed on single strand DNA to capture double-strand DNA. This complex stimulates both synaptic and presynaptic critical steps in RAD51 and DMC1-promoted homologous pairing. May inhibit HIV-1 viral protein TAT activity and modulate the activity of proteasomes through association with PSMC3. Acts as a tissue specific coactivator of hormone-dependent transcription mediated by nuclear receptors. This is Homologous-pairing protein 2 homolog (PSMC3IP) from Homo sapiens (Human).